We begin with the raw amino-acid sequence, 420 residues long: Type II methyltransferase M.NmeDI (420 aa).

A disordered region spans residues 1 to 23; it reads MMSLKIQPAVPKKSDKPSATNRD. Residues 56–411 enclose the SAM-dependent MTase C5-type domain; it reads TLIFSFFSGA…MTLKSYLENH (356 aa). Residue C148 is part of the active site.

It belongs to the class I-like SAM-binding methyltransferase superfamily. C5-methyltransferase family.

The enzyme catalyses a 2'-deoxycytidine in DNA + S-adenosyl-L-methionine = a 5-methyl-2'-deoxycytidine in DNA + S-adenosyl-L-homocysteine + H(+). Functionally, a methylase that recognizes the double-stranded sequence 5'-RCCGGB-3', methylates C-2 on both strands, and protects the DNA from cleavage by the NmeDI endonuclease. This Neisseria meningitidis serogroup C protein is Type II methyltransferase M.NmeDI (nmeDIMP).